The sequence spans 202 residues: Imidazole glycerol phosphate synthase subunit HisH (202 aa).

Residues Arg-3–Cys-202 form the Glutamine amidotransferase type-1 domain. The Nucleophile role is filled by Cys-79. Active-site residues include His-183 and Glu-185.

In terms of assembly, heterodimer of HisH and HisF.

The protein localises to the cytoplasm. It carries out the reaction 5-[(5-phospho-1-deoxy-D-ribulos-1-ylimino)methylamino]-1-(5-phospho-beta-D-ribosyl)imidazole-4-carboxamide + L-glutamine = D-erythro-1-(imidazol-4-yl)glycerol 3-phosphate + 5-amino-1-(5-phospho-beta-D-ribosyl)imidazole-4-carboxamide + L-glutamate + H(+). The enzyme catalyses L-glutamine + H2O = L-glutamate + NH4(+). Its pathway is amino-acid biosynthesis; L-histidine biosynthesis; L-histidine from 5-phospho-alpha-D-ribose 1-diphosphate: step 5/9. Functionally, IGPS catalyzes the conversion of PRFAR and glutamine to IGP, AICAR and glutamate. The HisH subunit catalyzes the hydrolysis of glutamine to glutamate and ammonia as part of the synthesis of IGP and AICAR. The resulting ammonia molecule is channeled to the active site of HisF. This Methanosarcina barkeri (strain Fusaro / DSM 804) protein is Imidazole glycerol phosphate synthase subunit HisH.